Consider the following 365-residue polypeptide: Isopentenyl-diphosphate delta-isomerase (365 aa).

Position 8 to 9 (8 to 9) interacts with substrate; the sequence is RK. FMN is bound by residues 67–69, serine 97, and asparagine 126; that span reads SIT. 97–99 provides a ligand contact to substrate; it reads SQR. Glutamine 160 provides a ligand contact to substrate. Glutamate 161 serves as a coordination point for Mg(2+). FMN contacts are provided by residues lysine 192, threonine 222, 272–274, and 293–294; these read GIR and AL.

It belongs to the IPP isomerase type 2 family. As to quaternary structure, homooctamer. Dimer of tetramers. FMN serves as cofactor. Requires NADPH as cofactor. Mg(2+) is required as a cofactor.

It is found in the cytoplasm. The enzyme catalyses isopentenyl diphosphate = dimethylallyl diphosphate. Involved in the biosynthesis of isoprenoids. Catalyzes the 1,3-allylic rearrangement of the homoallylic substrate isopentenyl (IPP) to its allylic isomer, dimethylallyl diphosphate (DMAPP). This chain is Isopentenyl-diphosphate delta-isomerase, found in Methanosarcina mazei (strain ATCC BAA-159 / DSM 3647 / Goe1 / Go1 / JCM 11833 / OCM 88) (Methanosarcina frisia).